A 79-amino-acid polypeptide reads, in one-letter code: WAP four-disulfide core domain protein 10A (79 aa).

The signal sequence occupies residues 1–21 (MAPQTLLPVLVLCVLLLQAQG). The 46-residue stretch at 34 to 79 (LSPEIKVCQQQPKLYLCKHLCESHRDCQANNICCSTYCGNVCMSIL) folds into the WAP domain. Disulfide bonds link Cys-41-Cys-67, Cys-50-Cys-71, Cys-54-Cys-66, and Cys-60-Cys-75.

Its subcellular location is the secreted. In Homo sapiens (Human), this protein is WAP four-disulfide core domain protein 10A (WFDC10A).